The primary structure comprises 202 residues: Glycerol-3-phosphate acyltransferase (202 aa).

6 helical membrane-spanning segments follow: residues 2–22 (MIIV…GFVI), 54–74 (FLVT…PLWL), 85–105 (FFTN…YPVY), 120–140 (VVLG…FIIL), 141–161 (KIFK…VIGS), and 162–182 (LIIQ…ILII).

This sequence belongs to the PlsY family. Probably interacts with PlsX.

The protein resides in the cell membrane. It carries out the reaction an acyl phosphate + sn-glycerol 3-phosphate = a 1-acyl-sn-glycero-3-phosphate + phosphate. Its pathway is lipid metabolism; phospholipid metabolism. Its function is as follows. Catalyzes the transfer of an acyl group from acyl-phosphate (acyl-PO(4)) to glycerol-3-phosphate (G3P) to form lysophosphatidic acid (LPA). This enzyme utilizes acyl-phosphate as fatty acyl donor, but not acyl-CoA or acyl-ACP. In Staphylococcus aureus (strain bovine RF122 / ET3-1), this protein is Glycerol-3-phosphate acyltransferase.